The chain runs to 272 residues: Phosphate import ATP-binding protein PstB 1 (272 aa).

Positions 26 to 267 (ITIENLDLHY…PMKKQTEDYI (242 aa)) constitute an ABC transporter domain. ATP is bound at residue 58-65 (GPSGCGKS).

This sequence belongs to the ABC transporter superfamily. Phosphate importer (TC 3.A.1.7) family. In terms of assembly, the complex is composed of two ATP-binding proteins (PstB), two transmembrane proteins (PstC and PstA) and a solute-binding protein (PstS).

The protein resides in the cell inner membrane. The enzyme catalyses phosphate(out) + ATP + H2O = ADP + 2 phosphate(in) + H(+). Functionally, part of the ABC transporter complex PstSACB involved in phosphate import. Responsible for energy coupling to the transport system. This chain is Phosphate import ATP-binding protein PstB 1, found in Vibrio vulnificus (strain YJ016).